A 343-amino-acid chain; its full sequence is Methionine import ATP-binding protein MetN 3 (343 aa).

In terms of domain architecture, ABC transporter spans 2–241 (IELSNITKVF…PKTPLAQKFI (240 aa)). 38 to 45 (GASGAGKS) lines the ATP pocket.

The protein belongs to the ABC transporter superfamily. Methionine importer (TC 3.A.1.24) family. As to quaternary structure, the complex is composed of two ATP-binding proteins (MetN), two transmembrane proteins (MetI) and a solute-binding protein (MetQ).

Its subcellular location is the cell inner membrane. The enzyme catalyses L-methionine(out) + ATP + H2O = L-methionine(in) + ADP + phosphate + H(+). It catalyses the reaction D-methionine(out) + ATP + H2O = D-methionine(in) + ADP + phosphate + H(+). Its function is as follows. Part of the ABC transporter complex MetNIQ involved in methionine import. Responsible for energy coupling to the transport system. The polypeptide is Methionine import ATP-binding protein MetN 3 (Pectobacterium atrosepticum (strain SCRI 1043 / ATCC BAA-672) (Erwinia carotovora subsp. atroseptica)).